We begin with the raw amino-acid sequence, 256 residues long: Ferritin-3, chloroplastic (256 aa).

The N-terminal 54 residues, 1 to 54 (MALSCSKVLTFSLSSVVGGDDAKKKLSLCSSSSLSASVNGGGSRNMRVCAAASN), are a transit peptide targeting the chloroplast. The extension peptide (EP) stretch occupies residues 55–87 (APAPLTGVIFEPFQELKKDYLAVPIAPNVSLSR). The region spanning 88-241 (QNYSDEAEAA…EYVTQLRLVG (154 aa)) is the Ferritin-like diiron domain. Fe cation contacts are provided by Glu105, Glu140, His143, Glu189, and Gln223.

The protein belongs to the ferritin family. Oligomer of 24 subunits. There are two types of subunits: L (light) chain and H (heavy) chain. The major chain can be light or heavy, depending on the species and tissue type. The functional molecule forms a roughly spherical shell with a diameter of 12 nm and contains a central cavity into which the insoluble mineral iron core is deposited.

It is found in the plastid. The protein resides in the chloroplast. It catalyses the reaction 4 Fe(2+) + O2 + 4 H(+) = 4 Fe(3+) + 2 H2O. Its function is as follows. Stores iron in a soluble, non-toxic, readily available form. Important for iron homeostasis. Has ferroxidase activity. Iron is taken up in the ferrous form and deposited as ferric hydroxides after oxidation. The protein is Ferritin-3, chloroplastic of Vigna unguiculata (Cowpea).